A 121-amino-acid chain; its full sequence is Small ribosomal subunit protein uS13 (121 aa).

Residues 89 to 121 are disordered; the sequence is MRHRRGLPVRGQHTKNNARTRKGKKVSIAGRKK.

It belongs to the universal ribosomal protein uS13 family. In terms of assembly, part of the 30S ribosomal subunit. Forms a loose heterodimer with protein S19. Forms two bridges to the 50S subunit in the 70S ribosome.

Functionally, located at the top of the head of the 30S subunit, it contacts several helices of the 16S rRNA. In the 70S ribosome it contacts the 23S rRNA (bridge B1a) and protein L5 of the 50S subunit (bridge B1b), connecting the 2 subunits; these bridges are implicated in subunit movement. Contacts the tRNAs in the A and P-sites. This chain is Small ribosomal subunit protein uS13, found in Pediococcus pentosaceus (strain ATCC 25745 / CCUG 21536 / LMG 10740 / 183-1w).